Consider the following 61-residue polypeptide: Large ribosomal subunit protein uL30 (61 aa).

The protein belongs to the universal ribosomal protein uL30 family. In terms of assembly, part of the 50S ribosomal subunit.

The chain is Large ribosomal subunit protein uL30 from Rhizorhabdus wittichii (strain DSM 6014 / CCUG 31198 / JCM 15750 / NBRC 105917 / EY 4224 / RW1) (Sphingomonas wittichii).